We begin with the raw amino-acid sequence, 462 residues long: 3-oxoacyl-[acyl-carrier-protein] synthase I, chloroplastic (462 aa).

A chloroplast-targeting transit peptide spans 1-35 (MHAHAAHALGLRVPPPAFPRRRARPRRRPAAAVLA). The tract at residues 1-45 (MHAHAAHALGLRVPPPAFPRRRARPRRRPAAAVLATSAAPQRETD) is disordered. The span at 19 to 29 (PRRRARPRRRP) shows a compositional bias: basic residues. Residues 30 to 39 (AAAVLATSAA) are compositionally biased toward low complexity. The Ketosynthase family 3 (KS3) domain maps to 47 to 459 (RKRVVITGMG…GHNSVVVFAP (413 aa)). Active-site for beta-ketoacyl synthase activity residues include Cys213, His353, and His389.

This sequence belongs to the thiolase-like superfamily. Beta-ketoacyl-ACP synthases family. Homodimer.

The protein resides in the plastid. It is found in the chloroplast. It carries out the reaction a fatty acyl-[ACP] + malonyl-[ACP] + H(+) = a 3-oxoacyl-[ACP] + holo-[ACP] + CO2. Catalyzes the condensation reaction of fatty acid synthesis by the addition to an acyl acceptor of two carbons from malonyl-ACP. Specific for elongation from C-10 to unsaturated C-16 and C-18 fatty acids. The protein is 3-oxoacyl-[acyl-carrier-protein] synthase I, chloroplastic (KAS12) of Hordeum vulgare (Barley).